The primary structure comprises 186 residues: uncharacterized protein (186 aa).

In terms of domain architecture, N-acetyltransferase spans 12 to 184 (LLKSPVEEDD…HIYKLSKQIR (173 aa)).

It belongs to the acetyltransferase family.

It localises to the cytoplasm. It is found in the nucleus. This is an uncharacterized protein from Schizosaccharomyces pombe (strain 972 / ATCC 24843) (Fission yeast).